We begin with the raw amino-acid sequence, 84 residues long: Small ribosomal subunit protein bS16 (84 aa).

It belongs to the bacterial ribosomal protein bS16 family.

The polypeptide is Small ribosomal subunit protein bS16 (Cupriavidus necator (strain ATCC 17699 / DSM 428 / KCTC 22496 / NCIMB 10442 / H16 / Stanier 337) (Ralstonia eutropha)).